The following is a 116-amino-acid chain: Spexin (116 aa).

The signal sequence occupies residues 1-26 (MKGPSVLAVTAVVLLLVLSALENSSG). Positions 27 to 35 (APQRLSEKR) are excised as a propeptide. At Gln-49 the chain carries Glutamine amide. 2 consecutive propeptides follow at residues 50–116 (GRRF…LFNW) and 74–116 (PDLE…LFNW). The disordered stretch occupies residues 52-77 (RFLSDQSRRKELADRPPPERRNPDLE). Basic and acidic residues predominate over residues 53-75 (FLSDQSRRKELADRPPPERRNPD).

Belongs to the spexin family.

Its subcellular location is the secreted. The protein localises to the extracellular space. The protein resides in the cytoplasmic vesicle. It is found in the secretory vesicle. Functionally, plays a role as a central modulator of cardiovascular and renal function and nociception. Also plays a role in energy metabolism and storage. Inhibits adrenocortical cell proliferation with minor stimulation on corticosteroid release. Its function is as follows. Acts as a ligand for galanin receptors GALR2 and GALR3. Intracerebroventricular administration of the peptide induces an increase in arterial blood pressure, a decrease in both heart rate and renal excretion and delayed natriuresis. Intraventricular administration of the peptide induces antinociceptive activity. Also induces contraction of muscarinic-like stomach smooth muscles. Intraperitoneal administration of the peptide induces a reduction in food consumption and body weight. Inhibits long chain fatty acid uptake into adipocytes. In terms of biological role, intracerebroventricular administration of the peptide induces a decrease in heart rate, but no change in arterial pressure, and an increase in urine flow rate. Intraventricular administration of the peptide induces antinociceptive activity. In Mus musculus (Mouse), this protein is Spexin (Spx).